The sequence spans 319 residues: Ubiquinone biosynthesis protein COQ4, mitochondrial (319 aa).

A mitochondrion-targeting transit peptide spans 1–28 (MISRSIFSKSVSLQRSQNRSFLLTAASA). The Zn(2+) site is built by His205, Asp206, His209, and Glu221.

This sequence belongs to the COQ4 family. Component of a multi-subunit COQ enzyme complex, composed of at least COQ3, COQ4, COQ5, COQ6, COQ7 and COQ9. The cofactor is Zn(2+).

It is found in the mitochondrion inner membrane. It catalyses the reaction a 4-hydroxy-3-methoxy-5-(all-trans-polyprenyl)benzoate + H(+) = a 2-methoxy-6-(all-trans-polyprenyl)phenol + CO2. It functions in the pathway cofactor biosynthesis; ubiquinone biosynthesis. Its function is as follows. Lyase that catalyzes the C1-decarboxylation of 4-hydroxy-3-methoxy-5-(all-trans-polyprenyl)benzoic acid into 2-methoxy-6-(all-trans-polyprenyl)phenol during ubiquinone biosynthesis. In Clavispora lusitaniae (strain ATCC 42720) (Yeast), this protein is Ubiquinone biosynthesis protein COQ4, mitochondrial.